The primary structure comprises 122 residues: Dihydroneopterin aldolase (122 aa).

Substrate-binding positions include E21, Y53, and 72-73 (VE). K98 acts as the Proton donor/acceptor in catalysis.

Belongs to the DHNA family. In terms of assembly, homooctamer.

It carries out the reaction 7,8-dihydroneopterin = 6-hydroxymethyl-7,8-dihydropterin + glycolaldehyde. The enzyme catalyses 7,8-dihydroneopterin = 7,8-dihydromonapterin. Its pathway is cofactor biosynthesis; tetrahydrofolate biosynthesis; 2-amino-4-hydroxy-6-hydroxymethyl-7,8-dihydropteridine diphosphate from 7,8-dihydroneopterin triphosphate: step 3/4. In terms of biological role, catalyzes the conversion of 7,8-dihydroneopterin to 6-hydroxymethyl-7,8-dihydropterin. Can use L-threo-dihydroneopterin and D-erythro-dihydroneopterin as substrates for the formation of 6-hydroxymethyldihydropterin, but it can also catalyze the epimerization of carbon 2' of dihydroneopterin to dihydromonapterin at appreciable velocity. The chain is Dihydroneopterin aldolase (folB) from Escherichia coli O6:H1 (strain CFT073 / ATCC 700928 / UPEC).